The primary structure comprises 766 residues: FYVE, RhoGEF and PH domain-containing protein 4 (766 aa).

Residues 1–150 (MEESNPAPTS…SSIANSHDEN (150 aa)) form an actin filament-binding region. 2 stretches are compositionally biased toward polar residues: residues 47–62 (LNIP…TSSP) and 70–85 (HSPQ…TQGQ). Disordered stretches follow at residues 47–86 (LNIP…QGQH) and 143–173 (IANS…GEPG). Positions 206–393 (KLHKIATELL…STAASHSNSA (188 aa)) constitute a DH domain. A PH 1 domain is found at 422–521 (ELIKEGQILK…WIKALQESID (100 aa)). The FYVE-type zinc finger occupies 559–619 (DNEVTMCMKC…VCKDCYQIIS (61 aa)). The Zn(2+) site is built by cysteine 565, cysteine 568, cysteine 582, cysteine 585, cysteine 590, cysteine 593, cysteine 611, and cysteine 614. The PH 2 domain occupies 643-740 (NSEVCSFLQY…WLKIILLAVT (98 aa)). Phosphoserine occurs at positions 702 and 716. Residues 746-766 (GPSEHLATLNNLPGPKKKSEC) form a disordered region.

As to quaternary structure, homooligomer. As to expression, detected in thymus, lung, heart, skeletal muscle, small intestine, liver, kidney, spleen and testis. Expressed in all parts of the brain and in the spinal cord at embryonic, postnatal, and adult stages. Levels of expression are lower in postnatal and adult tissues than in embryonic tissues.

The protein localises to the cytoplasm. The protein resides in the cytoskeleton. It localises to the cell projection. Its subcellular location is the filopodium. In terms of biological role, activates CDC42, a member of the Ras-like family of Rho- and Rac proteins, by exchanging bound GDP for free GTP. Activates MAPK8. Plays a role in regulating the actin cytoskeleton and cell shape. Promotes the formation of lamellipodia. This Mus musculus (Mouse) protein is FYVE, RhoGEF and PH domain-containing protein 4 (Fgd4).